Here is a 233-residue protein sequence, read N- to C-terminus: Small ribosomal subunit protein uS5 (233 aa).

Polar residues predominate over residues 1–13 (MAEETQNTVATES). The segment at 1 to 40 (MAEETQNTVATESNNEDRKGRRGQRGEGRRGERRNRREEN) is disordered. Basic and acidic residues predominate over residues 15–40 (NEDRKGRRGQRGEGRRGERRNRREEN). The S5 DRBM domain occupies 45 to 108 (LLDRVVTINR…LDAKKHMFSV (64 aa)).

The protein belongs to the universal ribosomal protein uS5 family. As to quaternary structure, part of the 30S ribosomal subunit. Contacts proteins S4 and S8.

Functionally, with S4 and S12 plays an important role in translational accuracy. In terms of biological role, located at the back of the 30S subunit body where it stabilizes the conformation of the head with respect to the body. The chain is Small ribosomal subunit protein uS5 from Bifidobacterium longum (strain NCC 2705).